Reading from the N-terminus, the 516-residue chain is Rho guanine nucleotide exchange factor 9 (516 aa).

The region spanning aspartate 8–asparagine 67 is the SH3 domain. Residues arginine 100–glutamate 110 form an interaction with GPHN region. The DH domain maps to methionine 103–arginine 287. The PH domain maps to glutamate 318–lysine 425. Residues proline 453 to tyrosine 480 are disordered. Phosphoserine is present on serine 502.

As to quaternary structure, interacts with GPHN. As to expression, detected in brain. Detected at low levels in heart.

Its subcellular location is the cytoplasm. It is found in the postsynaptic density. Acts as a guanine nucleotide exchange factor (GEF) for CDC42. Promotes formation of GPHN clusters. The sequence is that of Rho guanine nucleotide exchange factor 9 (ARHGEF9) from Homo sapiens (Human).